We begin with the raw amino-acid sequence, 376 residues long: Mannosyl phosphorylinositol ceramide synthase CSH1 (376 aa).

The next 2 membrane-spanning stretches (helical) occupy residues 7 to 27 and 274 to 294; these read ILIIANIALLISIIHYTFDLL and ILSCVVTGFIFGFFILYGEFT. A disordered region spans residues 331-351; sequence NKEKRRNPTRHEYNSRGKRLR. Ser354 is modified (phosphoserine).

This sequence belongs to the glycosyltransferase 32 family. In terms of assembly, heterodimer of CSH1 and CSG2.

Its subcellular location is the vacuole membrane. It catalyses the reaction a 1D-myo-inositol-1-phospho-N-[(R)-2-hydroxy-very-long-chain fatty acyl]-(R)-4-hydroxysphingoid base + GDP-alpha-D-mannose = an alpha-D-mannosyl-(1&lt;-&gt;6)-1D-myo-inositol-1-phospho-N-[(R)-2-hydroxy-very-long-chain fatty acyl]-(R)-4-hydroxysphingoid base + GDP + H(+). Functionally, involved in the synthesis of mannosyl phosphorylinositol ceramide. Catalyzes the addition of mannosyl to phosphorylinositol ceramide. The chain is Mannosyl phosphorylinositol ceramide synthase CSH1 from Saccharomyces cerevisiae (strain ATCC 204508 / S288c) (Baker's yeast).